A 447-amino-acid polypeptide reads, in one-letter code: MDEEYDVIVLGTGLTECILSGIMSVNGKKVLHMDRNPYYGGESSSITPLEELYKRFQLLEGPPEAMGRGRDWNVDLIPKFLMANGQLVKMLLYTEVTRYLDFKVVEGSFIYKGGKIYKVPSTETEALASNLMGMFEKRRFRKFLVFVANFDENDPKTFEGVDPQSTSMRDVYRKFDLGQDVIDFTGHALALYRTDDYLDQPCLETINRIKLYSESLARYGKSPYLYPLYGLGELPQGFARLSAIYGGTYMLNKPVDDIIMENGKVVGVKSEGEVARCKQLICDPSYIPDRVRKAGQVIRIICILSHPIKNTNDANSCQIIIPQNQVNRKSDIYVCMISYAHNVAAQGKYIAIASTTVETAEPEKEVEPALELLEPIDQKFVAISDLYEPIDDGSESQVFCSCSYDATTHFETTCNDIKDIYKRMAGSAFDFENMKRKQNDVFGEADQ.

The residue at position 427 (Ser-427) is a Phosphoserine.

It belongs to the Rab GDI family. As to quaternary structure, interacts with RHOH. Interacts with the non-phosphorylated forms of RAB1A, RAB3A, RAB5A, RAB5B, RAB5C, RAB8A, RAB8B, RAB10, RAB12, RAB35, and RAB43.

It is found in the cytoplasm. It localises to the golgi apparatus. The protein localises to the trans-Golgi network. Functionally, regulates the GDP/GTP exchange reaction of most Rab proteins by inhibiting the dissociation of GDP from them, and the subsequent binding of GTP to them. Promotes the dissociation of GDP-bound Rab proteins from the membrane and inhibits their activation. Promotes the dissociation of RAB1A, RAB3A, RAB5A and RAB10 from membranes. This is Rab GDP dissociation inhibitor alpha (GDI1) from Canis lupus familiaris (Dog).